The following is a 404-amino-acid chain: uncharacterized protein (404 aa).

Disordered regions lie at residues 261-307 and 320-340; these read VSTG…SPSL and KKSHSANDSEEFFREDDGGAD. 3 positions are modified to phosphoserine: S267, S276, and S279. 2 positions are modified to phosphothreonine: T290 and T293. Residues S304, S306, S324, S358, and S362 each carry the phosphoserine modification. A compositionally biased stretch (basic and acidic residues) spans 320–336; that stretch reads KKSHSANDSEEFFREDD.

This is an uncharacterized protein from Homo sapiens (Human).